Reading from the N-terminus, the 290-residue chain is Enoyl-CoA hydratase, mitochondrial (290 aa).

The transit peptide at 1–27 (MAALRALLPRVRAPLRPWLFCPVQRSF) directs the protein to the mitochondrion. Residues 98–101 (ADIK) and Gly-141 each bind substrate. Lys-101 is modified (N6-acetyllysine; alternate). Lys-101 is modified (N6-succinyllysine; alternate). Lys-204 bears the N6-succinyllysine mark. Residue Lys-211 is modified to N6-acetyllysine.

It belongs to the enoyl-CoA hydratase/isomerase family. As to quaternary structure, homohexamer; dimer of trimers.

It is found in the mitochondrion matrix. It catalyses the reaction a (3S)-3-hydroxyacyl-CoA = a (2E)-enoyl-CoA + H2O. The enzyme catalyses a (3E)-enoyl-CoA = a 4-saturated (2E)-enoyl-CoA. It carries out the reaction (3E)-hexenoyl-CoA = (2E)-hexenoyl-CoA. The catalysed reaction is (3S)-3-hydroxybutanoyl-CoA = (2E)-butenoyl-CoA + H2O. It catalyses the reaction 3-hydroxyisovaleryl-CoA = 3-methylbut-2-enoyl-CoA + H2O. The enzyme catalyses 3-hydroxypropanoyl-CoA = acryloyl-CoA + H2O. It carries out the reaction 3-hydroxybutanoyl-CoA = (2E)-butenoyl-CoA + H2O. The catalysed reaction is 2-methylpropenoyl-CoA + H2O = (S)-3-hydroxyisobutanoyl-CoA. It catalyses the reaction (3S)-hydroxyhexanoyl-CoA = (2E)-hexenoyl-CoA + H2O. The enzyme catalyses (3S)-hydroxydecanoyl-CoA = (2E)-decenoyl-CoA + H2O. The protein operates within lipid metabolism; fatty acid beta-oxidation. Converts unsaturated trans-2-enoyl-CoA species ((2E)-enoyl-CoA) to the corresponding 3(S)-3-hydroxyacyl-CoA species through addition of a water molecule to the double bond. Catalyzes the hydration of medium- and short-chained fatty enoyl-CoA thioesters from 4 carbons long (C4) up to C16. Has high substrate specificity for crotonyl-CoA ((2E)-butenoyl-CoA) and moderate specificity for acryloyl-CoA, 3-methylcrotonyl-CoA (3-methyl-(2E)-butenoyl-CoA) and methacrylyl-CoA ((2E)-2-methylpropenoyl-CoA). Can bind tiglyl-CoA (2-methylcrotonoyl-CoA), but hydrates only a small amount of this substrate. Plays a key role in the beta-oxidation spiral of short- and medium-chain fatty acid oxidation. At a lower rate than the hydratase reaction, catalyzes the isomerase reaction of trans-3-enoyl-CoA species (such as (3E)-hexenoyl-CoA) to trans-2-enoyl-CoA species (such as (2E)-hexenoyl-CoA), which are subsequently hydrated to 3(S)-3-hydroxyacyl-CoA species (such as (3S)-hydroxyhexanoyl-CoA). The polypeptide is Enoyl-CoA hydratase, mitochondrial (ECHS1) (Bos taurus (Bovine)).